The primary structure comprises 320 residues: Cytochrome f (320 aa).

An N-terminal signal peptide occupies residues 1-35 (MQTRNTFSWIREEITRSISVSLMIYIITWASISSA). Y36, C56, C59, and H60 together coordinate heme. A helical transmembrane segment spans residues 286–306 (VQGLLFFLGSVVLAQIFLVLK).

It belongs to the cytochrome f family. In terms of assembly, the 4 large subunits of the cytochrome b6-f complex are cytochrome b6, subunit IV (17 kDa polypeptide, petD), cytochrome f and the Rieske protein, while the 4 small subunits are PetG, PetL, PetM and PetN. The complex functions as a dimer. Heme is required as a cofactor.

It localises to the plastid. Its subcellular location is the chloroplast thylakoid membrane. In terms of biological role, component of the cytochrome b6-f complex, which mediates electron transfer between photosystem II (PSII) and photosystem I (PSI), cyclic electron flow around PSI, and state transitions. This chain is Cytochrome f, found in Crucihimalaya wallichii (Rock-cress).